Reading from the N-terminus, the 22-residue chain is Caerin-3.5 (22 aa).

Lys-22 carries the lysine amide modification.

In terms of tissue distribution, expressed by the skin dorsal glands.

It localises to the secreted. Functionally, shows significant activity against Gram-positive organisms, but is less effective against Gram-negative organisms. The polypeptide is Caerin-3.5 (Ranoidea gracilenta (Dainty green tree frog)).